Reading from the N-terminus, the 234-residue chain is 7-cyano-7-deazaguanine synthase (234 aa).

15 to 25 (LSGGLDSSTCL) provides a ligand contact to ATP. Cys199, Cys208, Cys211, and Cys214 together coordinate Zn(2+).

The protein belongs to the QueC family. Zn(2+) is required as a cofactor.

It catalyses the reaction 7-carboxy-7-deazaguanine + NH4(+) + ATP = 7-cyano-7-deazaguanine + ADP + phosphate + H2O + H(+). The protein operates within purine metabolism; 7-cyano-7-deazaguanine biosynthesis. In terms of biological role, catalyzes the ATP-dependent conversion of 7-carboxy-7-deazaguanine (CDG) to 7-cyano-7-deazaguanine (preQ(0)). The chain is 7-cyano-7-deazaguanine synthase from Anaeromyxobacter dehalogenans (strain 2CP-C).